A 317-amino-acid chain; its full sequence is Malate dehydrogenase (317 aa).

NAD(+) is bound by residues 10-15 and Asp-34; that span reads GGGQIG. Substrate contacts are provided by Arg-83 and Arg-89. NAD(+) contacts are provided by residues Asn-96 and 119 to 121; that span reads ISN. Positions 121 and 152 each coordinate substrate. His-176 serves as the catalytic Proton acceptor.

Belongs to the LDH/MDH superfamily. MDH type 3 family.

The enzyme catalyses (S)-malate + NAD(+) = oxaloacetate + NADH + H(+). Its function is as follows. Catalyzes the reversible oxidation of malate to oxaloacetate. The polypeptide is Malate dehydrogenase (Citrifermentans bemidjiense (strain ATCC BAA-1014 / DSM 16622 / JCM 12645 / Bem) (Geobacter bemidjiensis)).